Here is a 462-residue protein sequence, read N- to C-terminus: Transcript termination protein A18 (462 aa).

Residues 99–255 enclose the Helicase ATP-binding domain; that stretch reads KCKEKRPLYT…NSIINFIKFS (157 aa). An ATP-binding site is contributed by 112–119; sequence LACGFGKT. Residues 205–208 carry the DEAH box motif; that stretch reads DEAH. Positions 308–459 constitute a Helicase C-terminal domain; it reads IVDKIIETFK…ATKLGFREVS (152 aa).

The protein belongs to the helicase family. Poxviruses subfamily. As to quaternary structure, interacts with G2. Might be part of a transcription complex composed at least of G2, A18, and H5.

Its subcellular location is the virion. In terms of biological role, DNA helicase which seems to act as a postreplicative transcription termination factor. Involved in ATP-dependent release of nascent RNA. Forms a stable complex with single-stranded DNA, and to a lesser extent RNA. This is Transcript termination protein A18 from Vertebrata (FPV).